A 308-amino-acid polypeptide reads, in one-letter code: Cap-specific mRNA (nucleoside-2'-O-)-methyltransferase (308 aa).

Residue Tyr-30 coordinates mRNA. Positions 46, 74, 76, 80, 103, 105, 124, and 147 each coordinate S-adenosyl-L-methionine. Positions 177-257 (PIASSLKWRC…NTKIRPKIVL (81 aa)) are binding to NPH-I. Lys-183 (for methyltransferase activity) is an active-site residue. MRNA is bound by residues 185–188 (RCPF), Asp-190, 213–215 (SAE), and Glu-241.

This sequence belongs to the class I-like SAM-binding methyltransferase superfamily. Poxvirus/kinetoplastid 2'-O-MTase family. As to quaternary structure, interacts with poly(A) polymerase catalytic subunit OPG063. Interacts with OPG109 and OPG123; these interactions might help linking transcription to capping and polyadenylation.

The protein resides in the virion. It catalyses the reaction a 5'-end (N(7)-methyl 5'-triphosphoguanosine)-ribonucleoside in mRNA + S-adenosyl-L-methionine = a 5'-end (N(7)-methyl 5'-triphosphoguanosine)-(2'-O-methyl-ribonucleoside) in mRNA + S-adenosyl-L-homocysteine + H(+). Its function is as follows. Displays methyltransferase, positive regulation of the poly(A) polymerase and transcription elongation activities. Involved in the modification of both mRNA ends and in intermediate and late gene positive transcription elongation. At the mRNAs 5' end, methylates the ribose 2' OH group of the first transcribed nucleotide, thereby producing a 2'-O-methylpurine cap. At the 3' end, functions as a processivity factor which stimulates the activity of the viral poly(A) polymerase OPG063 that creates mRNA's poly(A) tail. In the presence of OPG102, OPG063 does not dissociate from the RNA allowing tail elongation to around 250 adenylates. The chain is Cap-specific mRNA (nucleoside-2'-O-)-methyltransferase (OPG102) from Fowlpox virus (strain NVSL) (FPV).